Here is a 208-residue protein sequence, read N- to C-terminus: Outer-membrane lipoprotein carrier protein (208 aa).

The signal sequence occupies residues 1–21; it reads MKKLNTLLLVLGSLVATPSFA. The disordered stretch occupies residues 188 to 208; sequence KSTFEFTPPEGVEIDDQSNGE. The segment covering 199-208 has biased composition (acidic residues); it reads VEIDDQSNGE.

The protein belongs to the LolA family. In terms of assembly, monomer.

Its subcellular location is the periplasm. Participates in the translocation of lipoproteins from the inner membrane to the outer membrane. Only forms a complex with a lipoprotein if the residue after the N-terminal Cys is not an aspartate (The Asp acts as a targeting signal to indicate that the lipoprotein should stay in the inner membrane). The chain is Outer-membrane lipoprotein carrier protein from Pseudoalteromonas translucida (strain TAC 125).